Reading from the N-terminus, the 62-residue chain is Photosystem II reaction center protein Z (62 aa).

2 consecutive transmembrane segments (helical) span residues 8 to 28 (SVFALIILSFLLVIGVPVVLA) and 41 to 61 (FSGASLWIGLVFLVGILNSFI).

This sequence belongs to the PsbZ family. As to quaternary structure, PSII is composed of 1 copy each of membrane proteins PsbA, PsbB, PsbC, PsbD, PsbE, PsbF, PsbH, PsbI, PsbJ, PsbK, PsbL, PsbM, PsbT, PsbY, PsbZ, Psb30/Ycf12, at least 3 peripheral proteins of the oxygen-evolving complex and a large number of cofactors. It forms dimeric complexes.

It localises to the plastid. Its subcellular location is the chloroplast thylakoid membrane. In terms of biological role, may control the interaction of photosystem II (PSII) cores with the light-harvesting antenna, regulates electron flow through the 2 photosystem reaction centers. PSII is a light-driven water plastoquinone oxidoreductase, using light energy to abstract electrons from H(2)O, generating a proton gradient subsequently used for ATP formation. This is Photosystem II reaction center protein Z from Staurastrum punctulatum (Green alga).